Reading from the N-terminus, the 633-residue chain is FAD-binding monooxygenase andJ (633 aa).

FAD contacts are provided by residues 117–120, 129–130, and Tyr135; these read TWYW and DT. 127 to 129 is an NADP(+) binding site; sequence MCD. NADP(+)-binding positions include 269 to 275 and 292 to 293; these read TGASAVQ and RT.

It belongs to the FAD-binding monooxygenase family. Requires FAD as cofactor.

It functions in the pathway secondary metabolite biosynthesis; terpenoid biosynthesis. In terms of biological role, FAD-binding monooxygenase; part of the gene cluster that mediates the biosynthesis of anditomin, a fungal meroterpenoid. The first step of the pathway is the synthesis of 3,5-dimethylorsellinic acid (DMOA) by the polyketide synthase andM. DMOA is then converted to the phthalide compound 5,7-dihydroxy-4,6-dimethylphthalide (DHDMP) by the cytochrome P450 monooxygenase andK, which is further prenylated by the prenyltransferase andD to yield farnesyl-DHDMP. Further epoxidation by the FAD-dependent monooxygenase andE leads to epoxyfarnesyl-DHDMP. The next step involves the terpene cyclase andB that converts epoxyfarnesyl-DHDMP into preandiloid A through opening of the epoxide ring followed by the cyclization of the farnesyl moiety. Preandiloid A is in turn oxidized at the C-3 hydroxyl group to yield preandiloid B by the dehydrogenase andC. The dioxygenase andA is solely responsible for the dehydrogenation of preandiloid B leading to the enone preandiloid C, as well as for the intriguing structural rearrangement to generate the bicyclo[2.2.2]octane core, transforming preandiloid C into andiconin. FAD-binding monooxygenase andJ then produces andilesin D which is reduced by dehydrogenase andI to yield andilesin A. Action of acetyltransferase andG followed by a spontaneous acetate elimination leads then to andilesin B, which is in turn substrate of the short chain dehydrogenase andH to yield andilesin C. Finally, the dioxygenase andF catalyzes the transformation of andilesin C to anditomin. The polypeptide is FAD-binding monooxygenase andJ (Emericella variicolor (Aspergillus stellatus)).